The primary structure comprises 391 residues: Formate-dependent phosphoribosylglycinamide formyltransferase (391 aa).

Residues E20–L21 and E80 contribute to the N(1)-(5-phospho-beta-D-ribosyl)glycinamide site. ATP contacts are provided by residues R112, K153, S158–Q163, E193–I196, and E201. The ATP-grasp domain occupies R117–L306. The Mg(2+) site is built by E265 and E277. Residues D284, K354, and R361–R362 each bind N(1)-(5-phospho-beta-D-ribosyl)glycinamide.

This sequence belongs to the PurK/PurT family. In terms of assembly, homodimer.

The enzyme catalyses N(1)-(5-phospho-beta-D-ribosyl)glycinamide + formate + ATP = N(2)-formyl-N(1)-(5-phospho-beta-D-ribosyl)glycinamide + ADP + phosphate + H(+). It participates in purine metabolism; IMP biosynthesis via de novo pathway; N(2)-formyl-N(1)-(5-phospho-D-ribosyl)glycinamide from N(1)-(5-phospho-D-ribosyl)glycinamide (formate route): step 1/1. Functionally, involved in the de novo purine biosynthesis. Catalyzes the transfer of formate to 5-phospho-ribosyl-glycinamide (GAR), producing 5-phospho-ribosyl-N-formylglycinamide (FGAR). Formate is provided by PurU via hydrolysis of 10-formyl-tetrahydrofolate. The polypeptide is Formate-dependent phosphoribosylglycinamide formyltransferase (Photobacterium profundum (strain SS9)).